Consider the following 918-residue polypeptide: Nitrate reductase [NADH] (918 aa).

The disordered stretch occupies residues 25-44 (KNGPNHRADSPVRGCNFPNS). Cys-195 lines the Mo-molybdopterin pocket. Positions 543–618 (SNTYTLSEVK…LEDYRIGELI (76 aa)) constitute a Cytochrome b5 heme-binding domain. Heme contacts are provided by His-578 and His-601. The region spanning 661–774 (NEKIPCKLIS…KGPLGHIEYT (114 aa)) is the FAD-binding FR-type domain. FAD-binding positions include 714–717 (RAYT), 731–735 (VVKVY), Phe-736, Phe-743, 748–750 (IMS), and Thr-801.

The protein belongs to the nitrate reductase family. Homodimer. FAD is required as a cofactor. It depends on heme as a cofactor. Requires Mo-molybdopterin as cofactor.

The catalysed reaction is nitrite + NAD(+) + H2O = nitrate + NADH + H(+). In terms of biological role, nitrate reductase is a key enzyme involved in the first step of nitrate assimilation in plants, fungi and bacteria. The sequence is that of Nitrate reductase [NADH] from Cucurbita maxima (Pumpkin).